Reading from the N-terminus, the 363-residue chain is Peptide chain release factor 1 (363 aa).

Glutamine 237 is subject to N5-methylglutamine. Positions 286 to 296 are enriched in basic and acidic residues; the sequence is EKRRSAEESTR. Residues 286–305 are disordered; sequence EKRRSAEESTRRSLVASGDR.

It belongs to the prokaryotic/mitochondrial release factor family. Methylated by PrmC. Methylation increases the termination efficiency of RF1.

The protein resides in the cytoplasm. Functionally, peptide chain release factor 1 directs the termination of translation in response to the peptide chain termination codons UAG and UAA. This is Peptide chain release factor 1 from Shewanella baltica (strain OS155 / ATCC BAA-1091).